We begin with the raw amino-acid sequence, 438 residues long: Protein ROOT INITIATION DEFECTIVE 3 (438 aa).

WD repeat units lie at residues Ala36–Lys74, Tyr76–Lys115, Gly118–Gln157, Glu171–Asn212, Ile214–Thr253, and Glu261–Thr300. A coiled-coil region spans residues Ala394–Ile434.

In terms of biological role, involved in meristem development. Acts as a negative regulator of the CUC-STM pathway in shoot apical meristem (SAM) neo-formation. This is Protein ROOT INITIATION DEFECTIVE 3 (RID3) from Arabidopsis thaliana (Mouse-ear cress).